Reading from the N-terminus, the 347-residue chain is UPF0324 membrane protein Atu0671 (347 aa).

Helical transmembrane passes span 15–37 (LRWL…AAIL), 50–72 (WLGD…SLPV), 105–127 (AGGL…SYAA), 140–162 (LIAC…AIGA), 172–194 (AFTA…LLGL), 201–223 (IFAG…LGAV), 233–250 (LIRV…SVIH), 263–282 (MVPW…SFGL), 287–309 (LLSP…LGLS), and 322–344 (VIIA…ILLT).

Belongs to the UPF0324 family.

The protein resides in the cell membrane. This Agrobacterium fabrum (strain C58 / ATCC 33970) (Agrobacterium tumefaciens (strain C58)) protein is UPF0324 membrane protein Atu0671.